Here is a 225-residue protein sequence, read N- to C-terminus: UPF0758 protein XAC3915 (225 aa).

Positions 102–224 (ALSDPPSVGR…PVSFAERGWL (123 aa)) constitute an MPN domain. Zn(2+) is bound by residues His173, His175, and Asp186. Residues 173-186 (HNHPSGNPEPSEAD) carry the JAMM motif motif.

This sequence belongs to the UPF0758 family.

In Xanthomonas axonopodis pv. citri (strain 306), this protein is UPF0758 protein XAC3915.